The sequence spans 312 residues: Very long chain fatty acid elongase 4 (312 aa).

The N-linked (GlcNAc...) asparagine glycan is linked to Asn20. 7 consecutive transmembrane segments (helical) span residues 42–62, 78–98, 127–147, 165–185, 188–208, 217–237, and 246–266; these read LMQS…FVWL, VLII…RELF, ALWW…FFIL, MFTL…FFGA, NSFI…GPWI, YLTM…ALSL, and WMHW…LNFY. A compositionally biased stretch (polar residues) spans 273-292; the sequence is PKQSKTGKTATNGISSNGVN. The segment at 273 to 312 is disordered; it reads PKQSKTGKTATNGISSNGVNKSEKALENGKPQKNGKPKGE. Asn292 carries N-linked (GlcNAc...) asparagine glycosylation. A Di-lysine motif motif is present at residues 308–312; the sequence is KPKGE.

Belongs to the ELO family. ELOVL4 subfamily. In terms of assembly, oligomer. Post-translationally, N-glycosylated. As to expression, expressed in the retina, exclusively in photoreceptor cells and in the brain, skin, testis and lens.

Its subcellular location is the endoplasmic reticulum membrane. It carries out the reaction a very-long-chain acyl-CoA + malonyl-CoA + H(+) = a very-long-chain 3-oxoacyl-CoA + CO2 + CoA. It catalyses the reaction hexacosanoyl-CoA + malonyl-CoA + H(+) = 3-oxooctacosanyol-CoA + CO2 + CoA. The catalysed reaction is octacosanoyl-CoA + malonyl-CoA + H(+) = 3-oxo-triacontanoyl-CoA + CO2 + CoA. The enzyme catalyses triacontanoyl-CoA + malonyl-CoA + H(+) = 3-oxo-dotriacontanoyl-CoA + CO2 + CoA. It carries out the reaction (19Z,22Z,25Z,28Z,31Z)-tetratriacontapentaenoyl-CoA + malonyl-CoA + H(+) = 3-oxo-(21Z,24Z,27Z,30Z,33Z)-hexatriacontapentaenoyl-CoA + CO2 + CoA. It catalyses the reaction (4Z,7Z,10Z,13Z,16Z,19Z)-docosahexaenoyl-CoA + malonyl-CoA + H(+) = 3-oxo-(6Z,9Z,12Z,15Z,18Z,21Z)-tetracosahexaenoyl-CoA + CO2 + CoA. The catalysed reaction is (7Z,10Z,13Z,16Z)-docosatetraenoyl-CoA + malonyl-CoA + H(+) = (9Z,12Z,15Z,18Z)-3-oxotetracosatetraenoyl-CoA + CO2 + CoA. The enzyme catalyses (11Z,14Z,17Z,20Z,23Z)-hexacosapentaenoyl-CoA + malonyl-CoA + H(+) = 3-oxo-(13Z,16Z,19Z,22Z,25Z)-octacosapentaenoyl-CoA + CO2 + CoA. It carries out the reaction (13Z,16Z,19Z,22Z,25Z)-octacosapentaenoyl-CoA + malonyl-CoA + H(+) = 3-oxo-(15Z,18Z,21Z,24Z,27Z)-triacontapentaenoyl-CoA + CO2 + CoA. It catalyses the reaction (15Z,18Z,21Z,24Z,27Z)-triacontapentaenoyl-CoA + malonyl-CoA + H(+) = 3-oxo-(17Z,20Z,23Z,26Z,29Z)-dotriacontapentaenoyl-CoA + CO2 + CoA. The catalysed reaction is (17Z,20Z,23Z,26Z,29Z)-dotriacontapentaenoyl-CoA + malonyl-CoA + H(+) = 3-oxo-(19Z,22Z,25Z,28Z,31Z)-tetratriacontapentaenoyl-CoA + CO2 + CoA. The enzyme catalyses (21Z,24Z,27Z,30Z,33Z)-hexatriacontapentaenoyl-CoA + malonyl-CoA + H(+) = 3-oxo-(23Z,26Z,29Z,32Z,35Z)-octatriacontapentaenoyl-CoA + CO2 + CoA. It carries out the reaction (11Z,14Z,17Z,20Z)-hexacosatetraenoyl-CoA + malonyl-CoA + H(+) = (13Z,16Z,19Z,22Z)-3-oxooctacosatetraenoyl-CoA + CO2 + CoA. It catalyses the reaction (13Z,16Z,19Z,22Z)-octacosatetraenoyl-CoA + malonyl-CoA + H(+) = 3-oxo-(15Z,18Z,21Z,24Z)-triacontatetraenoyl-CoA + CO2 + CoA. The catalysed reaction is (15Z,18Z,21Z,24Z)-triacontatetraenoyl-CoA + malonyl-CoA + H(+) = 3-oxo-(17Z,20Z,23Z,26Z)-dotriacontatetraenoyl-CoA + CO2 + CoA. The enzyme catalyses (17Z,20Z,23Z,26Z)-dotriacontatetraenoyl-CoA + malonyl-CoA + H(+) = 3-oxo-(19Z,22Z,25Z,28Z)-tetratriacontatetraenoyl-CoA + CO2 + CoA. It carries out the reaction (19Z,22Z,25Z,28Z)-tetratriacontatetraenoyl-CoA + malonyl-CoA + H(+) = 3-oxo-(21Z,24Z,27Z,30Z)-hexatriacontatetraenoyl-CoA + CO2 + CoA. It catalyses the reaction (21Z,24Z,27Z,30Z)-hexatriacontatetraenoyl-CoA + malonyl-CoA + H(+) = 3-oxo-(23Z,26Z,29Z,32Z)-octatriacontatetraenoyl-CoA + CO2 + CoA. The catalysed reaction is (6Z,9Z,12Z,15Z,18Z,21Z)-tetracosahexaenoyl-CoA + malonyl-CoA + H(+) = 3-oxo-(8Z,11Z,14Z,17Z,20Z,23Z)-hexacosahexaenoyl-CoA + CO2 + CoA. The enzyme catalyses (8Z,11Z,14Z,17Z,20Z,23Z)-hexacosahexaenoyl-CoA + malonyl-CoA + H(+) = 3-oxo-(10Z,13Z,16Z,19Z,22Z,25Z)-octacosahexaenoyl-CoA + CO2 + CoA. It carries out the reaction (10Z,13Z,16Z,19Z,22Z,25Z)-octacosahexaenoyl-CoA + malonyl-CoA + H(+) = 3-oxo-(12Z,15Z,18Z,21Z,24Z,27Z)-triacontahexaenoyl-CoA + CO2 + CoA. It catalyses the reaction (12Z,15Z,18Z,21Z,24Z,27Z)-triacontahexaenoyl-CoA + malonyl-CoA + H(+) = 3-oxo-(14Z,17Z,20Z,23Z,26Z,29Z)-dotriacontahexaenoyl-CoA + CO2 + CoA. The catalysed reaction is (14Z,17Z,20Z,23Z,26Z,29Z)-dotriacontahexaenoyl-CoA + malonyl-CoA + H(+) = 3-oxo-(16Z,19Z,22Z,25Z,28Z,31Z)-tetratriacontahexaenoyl-CoA + CO2 + CoA. The enzyme catalyses (16Z,19Z,22Z,25Z,28Z,31Z)-tetratriacontahexaenoyl-CoA + malonyl-CoA + H(+) = 3-oxo-(18Z,21Z,24Z,27Z,30Z,33Z)-hexatriacontahexaenoyl-CoA + CO2 + CoA. It carries out the reaction (9Z,12Z,15Z,18Z,21Z)-tetracosapentaenoyl-CoA + malonyl-CoA + H(+) = 3-oxo-(11Z,14Z,17Z,20Z,23Z)-hexacosapentaenoyl-CoA + CO2 + CoA. It participates in lipid metabolism; fatty acid biosynthesis. Its function is as follows. Catalyzes the first and rate-limiting reaction of the four reactions that constitute the long-chain fatty acids elongation cycle. This endoplasmic reticulum-bound enzymatic process allows the addition of 2 carbons to the chain of long- and very long-chain fatty acids (VLCFAs) per cycle. Condensing enzyme that catalyzes the synthesis of very long chain saturated (VLC-SFA) and polyunsaturated (PUFA) fatty acids that are involved in multiple biological processes as precursors of membrane lipids and lipid mediators. May play a critical role in early brain and skin development. The sequence is that of Very long chain fatty acid elongase 4 from Mus musculus (Mouse).